Consider the following 355-residue polypeptide: D-alanine--D-alanine ligase (355 aa).

Residues 143–350 (KQIFSNLSIP…IDQLVAKLID (208 aa)) form the ATP-grasp domain. ATP is bound at residue 178–233 (IEKLNLPVFVKPANSGSSLGISKAKNKSEIIKALQKAWEIDSRIVIEEGLNVRELE). Residues aspartate 303, glutamate 317, and asparagine 319 each coordinate Mg(2+).

It belongs to the D-alanine--D-alanine ligase family. Requires Mg(2+) as cofactor. It depends on Mn(2+) as a cofactor.

It localises to the cytoplasm. It carries out the reaction 2 D-alanine + ATP = D-alanyl-D-alanine + ADP + phosphate + H(+). It functions in the pathway cell wall biogenesis; peptidoglycan biosynthesis. Its function is as follows. Cell wall formation. The polypeptide is D-alanine--D-alanine ligase (Prochlorococcus marinus (strain MIT 9515)).